Reading from the N-terminus, the 207-residue chain is Protein FAM177A1 (207 aa).

Methionine 1 carries the post-translational modification N-acetylmethionine. Position 65 is a phosphoserine (serine 65). At threonine 66 the chain carries Phosphothreonine. A coiled-coil region spans residues 131-170; that stretch reads IDEYYRMKKEEEEEEEENRMSEEAERQYQQNKLQADSIVQ. The disordered stretch occupies residues 142–176; it reads EEEEEENRMSEEAERQYQQNKLQADSIVQTDQPET. Positions 157 to 176 are enriched in polar residues; sequence QYQQNKLQADSIVQTDQPET.

Belongs to the FAM177 family.

The sequence is that of Protein FAM177A1 (Fam177a1) from Mus musculus (Mouse).